Consider the following 37-residue polypeptide: Large ribosomal subunit protein bL36 (37 aa).

The protein belongs to the bacterial ribosomal protein bL36 family.

In Bacillus pumilus (strain SAFR-032), this protein is Large ribosomal subunit protein bL36.